Reading from the N-terminus, the 244-residue chain is MRKLILATFLLLAPTALLASGGGEHLESANIDLRDQASLQRGAKYFMNYCTGCHSLQYMRYNRLAKDLGIDEIALRQNLLFGDAKPGDLITKAMTDDDALKWFGVVPPDLTLVTRWRSPDWVYTYLKSFYLDDTRPYGVNNVLFPLVGMPHVLGDLQGRQEAVMEPSHEPGGEPTIKGVKLVEEGGLSPQEYDTMVRDITNFLTYAGEPFQLERERIGRYVLLFLGFLFILAYLLKKEYWKDVH.

The first 19 residues, 1-19, serve as a signal peptide directing secretion; it reads MRKLILATFLLLAPTALLA. 3 residues coordinate heme c: cysteine 50, cysteine 53, and histidine 54. The chain crosses the membrane as a helical span at residues 220–240; it reads YVLLFLGFLFILAYLLKKEYW.

As to quaternary structure, the main subunits of complex b-c1 are: cytochrome b, cytochrome c1 and the Rieske protein. Binds 1 heme c group covalently per subunit.

It is found in the cell membrane. Its function is as follows. Component of the ubiquinol-cytochrome c reductase complex (complex III or cytochrome b-c1 complex), which is a respiratory chain that generates an electrochemical potential coupled to ATP synthesis. c1 functions as an electron donor to cytochrome c. In Allochromatium vinosum (strain ATCC 17899 / DSM 180 / NBRC 103801 / NCIMB 10441 / D) (Chromatium vinosum), this protein is Cytochrome c1 (petC).